The following is a 371-amino-acid chain: Putative agmatine deiminase (371 aa).

Catalysis depends on C361, which acts as the Amidino-cysteine intermediate.

It belongs to the agmatine deiminase family.

It carries out the reaction agmatine + H2O = N-carbamoylputrescine + NH4(+). This is Putative agmatine deiminase from Selenomonas ruminantium.